Reading from the N-terminus, the 1118-residue chain is Isoleucine--tRNA ligase (1118 aa).

A 'HIGH' region motif is present at residues 64–74; the sequence is PFANGLPHYGH. Positions 647–651 match the 'KMSKS' region motif; that stretch reads KLSKR. K650 is a binding site for ATP.

The protein belongs to the class-I aminoacyl-tRNA synthetase family. IleS type 2 subfamily. Monomer. It depends on Zn(2+) as a cofactor.

It localises to the cytoplasm. The catalysed reaction is tRNA(Ile) + L-isoleucine + ATP = L-isoleucyl-tRNA(Ile) + AMP + diphosphate. Catalyzes the attachment of isoleucine to tRNA(Ile). As IleRS can inadvertently accommodate and process structurally similar amino acids such as valine, to avoid such errors it has two additional distinct tRNA(Ile)-dependent editing activities. One activity is designated as 'pretransfer' editing and involves the hydrolysis of activated Val-AMP. The other activity is designated 'posttransfer' editing and involves deacylation of mischarged Val-tRNA(Ile). This Ehrlichia ruminantium (strain Gardel) protein is Isoleucine--tRNA ligase.